Reading from the N-terminus, the 90-residue chain is Probable Fe(2+)-trafficking protein (90 aa).

This sequence belongs to the Fe(2+)-trafficking protein family.

Its function is as follows. Could be a mediator in iron transactions between iron acquisition and iron-requiring processes, such as synthesis and/or repair of Fe-S clusters in biosynthetic enzymes. This chain is Probable Fe(2+)-trafficking protein, found in Coxiella burnetii (strain CbuK_Q154) (Coxiella burnetii (strain Q154)).